The sequence spans 186 residues: Acireductone dioxygenase (186 aa).

Fe(2+) contacts are provided by H89, H91, E95, and H134. Ni(2+) contacts are provided by H89, H91, E95, and H134.

It belongs to the acireductone dioxygenase (ARD) family. Fe(2+) is required as a cofactor. Requires Ni(2+) as cofactor.

It localises to the cytoplasm. It is found in the nucleus. It catalyses the reaction 1,2-dihydroxy-5-(methylsulfanyl)pent-1-en-3-one + O2 = 4-methylsulfanyl-2-oxobutanoate + formate + 2 H(+). The enzyme catalyses 1,2-dihydroxy-5-(methylsulfanyl)pent-1-en-3-one + O2 = 3-(methylsulfanyl)propanoate + CO + formate + 2 H(+). It participates in amino-acid biosynthesis; L-methionine biosynthesis via salvage pathway; L-methionine from S-methyl-5-thio-alpha-D-ribose 1-phosphate: step 5/6. Catalyzes 2 different reactions between oxygen and the acireductone 1,2-dihydroxy-3-keto-5-methylthiopentene (DHK-MTPene) depending upon the metal bound in the active site. Fe-containing acireductone dioxygenase (Fe-ARD) produces formate and 2-keto-4-methylthiobutyrate (KMTB), the alpha-ketoacid precursor of methionine in the methionine recycle pathway. Ni-containing acireductone dioxygenase (Ni-ARD) produces methylthiopropionate, carbon monoxide and formate, and does not lie on the methionine recycle pathway. The sequence is that of Acireductone dioxygenase from Drosophila melanogaster (Fruit fly).